Here is a 364-residue protein sequence, read N- to C-terminus: Methylthioribose-1-phosphate isomerase (364 aa).

Substrate-binding positions include 51–53 (RGA), R88, and Q199. The active-site Proton donor is the D240. 250-251 (NK) is a binding site for substrate.

This sequence belongs to the eIF-2B alpha/beta/delta subunits family. MtnA subfamily.

The enzyme catalyses 5-(methylsulfanyl)-alpha-D-ribose 1-phosphate = 5-(methylsulfanyl)-D-ribulose 1-phosphate. It participates in amino-acid biosynthesis; L-methionine biosynthesis via salvage pathway; L-methionine from S-methyl-5-thio-alpha-D-ribose 1-phosphate: step 1/6. In terms of biological role, catalyzes the interconversion of methylthioribose-1-phosphate (MTR-1-P) into methylthioribulose-1-phosphate (MTRu-1-P). The protein is Methylthioribose-1-phosphate isomerase of Cereibacter sphaeroides (strain KD131 / KCTC 12085) (Rhodobacter sphaeroides).